The sequence spans 1367 residues: Collagen alpha-1(XV) chain (1367 aa).

Residues 1–31 form the signal peptide; that stretch reads MTHRRTAQGRRPRWLLSIISALLSAVLQTRA. Residues 54–249 form the Laminin G-like domain; that stretch reads SVSFTTGYGG…SSASGEASGF (196 aa). Positions 229–604 are nonhelical region 1 (NC1); sequence RTPEELCEAQ…DIVGNEDLLR (376 aa). 2 O-linked (Xyl...) (chondroitin sulfate) serine glycosylation sites follow: Ser243 and Ser247. The interval 267 to 319 is disordered; sequence APPKESHVDPISVPPTSSSPAEDSELSGEPVPEGTPETNLSIIGHSSPEQGSG. Residues Asn305 and Asn323 are each glycosylated (N-linked (GlcNAc...) asparagine). An O-linked (Xyl...) (chondroitin sulfate) serine glycan is attached at Ser341. Residues Asn348, Asn375, and Asn402 are each glycosylated (N-linked (GlcNAc...) asparagine). Disordered stretches follow at residues 396 to 446 and 529 to 784; these read DTPD…SHGE and TAEP…GHVE. A compositionally biased stretch (polar residues) spans 402-429; the sequence is NLTTTASGDGEVPTSTDGDTEADSSPTG. Residues 434 to 446 are compositionally biased toward basic and acidic residues; the sequence is KPREEATLGSHGE. Pro residues predominate over residues 555 to 564; the sequence is PSGPPLPTPT. A compositionally biased stretch (gly residues) spans 582–595; it reads GPVGGLDEGSGSGD. Collagen-like domains follow at residues 605 to 665 and 666 to 717; these read GPPG…GMKG and EKGA…PPGP. Positions 605–718 are triple-helical region 1 (COL1); it reads GPPGPPGPPG…PGPPGPPGPG (114 aa). Residues 606-616 are compositionally biased toward pro residues; it reads PPGPPGPPGSP. N-linked (GlcNAc...) asparagine glycosylation occurs at Asn673. Positions 703–717 are enriched in pro residues; it reads MGPPGPPGPPGPPGP. Residues 719–748 form a nonhelical region 2 (NC2) region; the sequence is CTTELGFEIEGSGDVRLLSKPTISGPTSPS. A glycan (O-linked (Xyl...) (chondroitin sulfate) serine) is linked at Ser730. Residues 737–750 show a composition bias toward low complexity; it reads SKPTISGPTSPSGP. The tract at residues 749 to 783 is triple-helical region 2 (COL2); it reads GPKGEKGEQGAKGERGADGTSTMGPPGPRGPPGHV. Residues 751-765 show a composition bias toward basic and acidic residues; that stretch reads KGEKGEQGAKGERGA. Residues 784–807 are nonhelical region 3 (NC3); sequence EVLSSSLINITNGSMNFSDIPELM. Asn792, Asn795, and Asn799 each carry an N-linked (GlcNAc...) asparagine glycan. Collagen-like domains follow at residues 808–850 and 863–912; these read GPPG…GEPG and KGRK…GDRG. A triple-helical region 3 (COL3) region spans residues 808 to 852; that stretch reads GPPGPDGVPGLPGFPGPRGPKGDTGVPGFPGLKGEQGEKGEPGAI. Residues 853–863 are nonhelical region 4 (NC4); it reads LTGDVPLEMMK. The interval 864–934 is triple-helical region 4 (COL4); the sequence is GRKGEPGIHG…PGPPGPPGAV (71 aa). The tract at residues 905-930 is disordered; the sequence is KGAKGDRGVTLPGPPGLPGPPGPPGP. A compositionally biased stretch (pro residues) spans 916–930; that stretch reads PGPPGLPGPPGPPGP. The nonhelical region 5 (NC5) stretch occupies residues 935–968; that stretch reads VNIKGAVFPIPARPHCKTPVGTAHPGDPELVTFH. The interval 969 to 998 is triple-helical region 5 (COL5); sequence GVKGEKGSWGLPGSKGEKGDQGAQGPPGPP. 2 disordered regions span residues 974 to 1000 and 1055 to 1089; these read KGSWGLPGSKGEKGDQGAQGPPGPPVD and GPPGIPGLPGPPGFGRPGVPGPPGPPGPPGPPAIL. Residues 999 to 1031 form a nonhelical region 6 (NC6) region; that stretch reads VDPAYLRHFLNSLKGENEDASFRGESSNNLFVS. The tract at residues 1032 to 1086 is triple-helical region 6 (COL6); it reads GPPGLPGYPGLVGQKGEAVVGPQGPPGIPGLPGPPGFGRPGVPGPPGPPGPPGPP. A compositionally biased stretch (pro residues) spans 1055–1086; the sequence is GPPGIPGLPGPPGFGRPGVPGPPGPPGPPGPP. Residues 1087 to 1096 form a nonhelical region 7 (NC7) region; sequence AILGAAVALP. The triple-helical region 7 (COL7) stretch occupies residues 1097-1111; the sequence is GPPGPPGQPGLPGSR. The segment at 1112–1367 is nonhelical region 8 (NC8); it reads NLVTALSDMG…ENSFMTDTRK (256 aa). 2 disulfides stabilise this stretch: Cys1216–Cys1356 and Cys1318–Cys1348.

It belongs to the multiplexin collagen family. As to quaternary structure, trimer; disulfide-linked. Interacts moderately with EFEMP2. Prolines at the third position of the tripeptide repeating unit (G-X-Y) are hydroxylated in some or all of the chains. In terms of processing, O-glycosylated; contains chondroitin sulfate. In terms of tissue distribution, detected in testis, brain, heart, kidney, skeletal muscle and skin (at protein level). Detected in heart and skeletal muscle.

It is found in the secreted. Its subcellular location is the extracellular space. The protein localises to the extracellular matrix. In terms of biological role, structural protein that stabilizes microvessels and muscle cells, both in heart and in skeletal muscle. Functionally, restin potently inhibits angiogenesis. The chain is Collagen alpha-1(XV) chain (Col15a1) from Mus musculus (Mouse).